The chain runs to 527 residues: Putative BTB/POZ domain and WD-repeat protein R783 (527 aa).

One can recognise a BTB domain in the interval 45–115; it reads TDVTIVLDDG…FYSQNTDTRN (71 aa). 5 WD repeats span residues 215–266, 272–310, 313–353, 355–391, and 436–476; these read IHGD…VEAS, NVKTRFEHFCYLPSNNHLISTSSYNIYVWDLSTNKLIKT, KHKN…IVRC, ISPVDCICYSSSGRELVIVNKHYIKVFNVSDGTFLFK, and YCPS…DNKY.

Belongs to the mimivirus BTB/WD family.

In Acanthamoeba polyphaga (Amoeba), this protein is Putative BTB/POZ domain and WD-repeat protein R783.